A 430-amino-acid polypeptide reads, in one-letter code: 5-methylthioadenosine/S-adenosylhomocysteine deaminase (430 aa).

2 residues coordinate Zn(2+): His-59 and His-61. Substrate is bound by residues Glu-88 and His-181. His-208 is a binding site for Zn(2+). Substrate contacts are provided by Glu-211 and Asp-296. Zn(2+) is bound at residue Asp-296.

It belongs to the metallo-dependent hydrolases superfamily. MTA/SAH deaminase family. Zn(2+) is required as a cofactor.

It carries out the reaction S-adenosyl-L-homocysteine + H2O + H(+) = S-inosyl-L-homocysteine + NH4(+). It catalyses the reaction S-methyl-5'-thioadenosine + H2O + H(+) = S-methyl-5'-thioinosine + NH4(+). Functionally, catalyzes the deamination of 5-methylthioadenosine and S-adenosyl-L-homocysteine into 5-methylthioinosine and S-inosyl-L-homocysteine, respectively. Is also able to deaminate adenosine. This Aquifex aeolicus (strain VF5) protein is 5-methylthioadenosine/S-adenosylhomocysteine deaminase.